We begin with the raw amino-acid sequence, 427 residues long: MLDIKLLRENPTLVQERLDARKAGEYAIQPILDLDIQQRTLEGDRSQLQARSNEIGKLIGQKIKGGADPKGEEIATLKAEGNEIKQKLADLEPQEKELKAQIYNLLLALPNLPDQSTPVGTNETENVEVRRWGEAHKPTNENILPHWEIGEQLGILEFARSVKVAQSRFVSLVGAGAALERALINFMLDQQIAAGYVEVMPPVLINSDSLTGTGQLPKFAEESFRCADDDLWLTPTAEVPVTNLYRYEILEAENLPIYHCAYTPCFRREAGSYGKDTRGLIRLHQFNKVELVKFVHPETSAAEHEKLVANAEAILQALKLPYRVLELCSGDLGFSAGKCYDLEVWLPSADTYREISSCSNFYDFQARRAGIRFKEAGKKGTQFVHTLNGSGLAIGRTMAAILENYQQPNGTVAVPEVLRPYLKRDFL.

236–238 contacts L-serine; sequence TAE. An ATP-binding site is contributed by 267 to 269; sequence RRE. Glu290 lines the L-serine pocket. ATP is bound at residue 354–357; the sequence is EISS. Position 390 (Ser390) interacts with L-serine.

Belongs to the class-II aminoacyl-tRNA synthetase family. Type-1 seryl-tRNA synthetase subfamily. In terms of assembly, homodimer. The tRNA molecule binds across the dimer.

It is found in the cytoplasm. The enzyme catalyses tRNA(Ser) + L-serine + ATP = L-seryl-tRNA(Ser) + AMP + diphosphate + H(+). It carries out the reaction tRNA(Sec) + L-serine + ATP = L-seryl-tRNA(Sec) + AMP + diphosphate + H(+). The protein operates within aminoacyl-tRNA biosynthesis; selenocysteinyl-tRNA(Sec) biosynthesis; L-seryl-tRNA(Sec) from L-serine and tRNA(Sec): step 1/1. Functionally, catalyzes the attachment of serine to tRNA(Ser). Is also able to aminoacylate tRNA(Sec) with serine, to form the misacylated tRNA L-seryl-tRNA(Sec), which will be further converted into selenocysteinyl-tRNA(Sec). This chain is Serine--tRNA ligase, found in Picosynechococcus sp. (strain ATCC 27264 / PCC 7002 / PR-6) (Agmenellum quadruplicatum).